Consider the following 1173-residue polypeptide: Calcium-transporting ATPase 2 (1173 aa).

The segment at 1 to 24 is disordered; it reads MSRQDENSALLANNENNKPSYTGN. At 1–114 the chain is on the cytoplasmic side; sequence MSRQDENSAL…LQLVWAAFND (114 aa). Residues 7–17 are compositionally biased toward low complexity; that stretch reads NSALLANNENN. The chain crosses the membrane as a helical span at residues 115–139; that stretch reads KTMQLLTVAAVVSFVLGLYELWMQP. The Vacuolar segment spans residues 140–152; that stretch reads PQYDPEGNKIKQV. A helical transmembrane segment spans residues 153–173; it reads DWIEGVAIMIAVFVVVLVSAA. Residues 174-349 lie on the Cytoplasmic side of the membrane; the sequence is NDYQKELQFA…LADNISVYGC (176 aa). Residues 350–368 traverse the membrane as a helical segment; that stretch reads VSAIILFLVLFTRYLFYII. Residues 369–388 lie on the Vacuolar side of the membrane; that stretch reads PEDGRFHDLDPAQKGSKFMN. A helical transmembrane segment spans residues 389 to 409; sequence IFITSITVIVVAVPEGLPLAV. 2 residues coordinate Ca(2+): Val-398 and Glu-403. At 410–899 the chain is on the cytoplasmic side; sequence TLALAFATTR…RCVSVSIKKF (490 aa). Asp-445 functions as the 4-aspartylphosphate intermediate in the catalytic mechanism. Mg(2+)-binding residues include Asp-445 and Thr-447. Residues Thr-447, Lys-643, 762–764, Arg-816, and Lys-822 each bind ATP; that span reads TGD. Asp-841 provides a ligand contact to Mg(2+). Asn-844 is a binding site for ATP. A helical membrane pass occupies residues 900–922; that stretch reads IQFQLIVNITAVILTFVSSVASS. Asn-907 provides a ligand contact to Ca(2+). Residues 923-929 lie on the Vacuolar side of the membrane; that stretch reads DETSVLT. The chain crosses the membrane as a helical span at residues 930–950; sequence AVQLLWINLIMDTLAALALAT. Residues Asn-937 and Asp-941 each contribute to the Ca(2+) site. Residues 951-976 lie on the Cytoplasmic side of the membrane; the sequence is DKPDPNIMDRKPRGRSTSLISVSTWK. A helical transmembrane segment spans residues 977 to 998; the sequence is MILSQATLQLIVTFILHFYGPE. The Vacuolar portion of the chain corresponds to 999–1010; that stretch reads LFFKKHEDEITS. Residues 1011–1029 traverse the membrane as a helical segment; the sequence is HQQQQLNAMTFNTFVWLQF. Residues 1030–1065 lie on the Cytoplasmic side of the membrane; the sequence is FTMLVSRKLDEGDGISNWRGRISAANLNFFQDLGRN. A helical membrane pass occupies residues 1066–1086; the sequence is YYFLTIMAIIGSCQVLIMFFG. The Vacuolar portion of the chain corresponds to 1087 to 1099; sequence GAPFSIARQTKSM. A helical membrane pass occupies residues 1100–1120; it reads WITAVLCGMLSLIMGVLVRIC. Topologically, residues 1121–1173 are cytoplasmic; it reads PDEVAVKVFPAAFVQRFKYVFGLEFLRKNHTGKHDDEEALLEESDSPESTAFY.

Belongs to the cation transport ATPase (P-type) (TC 3.A.3) family.

It is found in the vacuole membrane. It catalyses the reaction Ca(2+)(in) + ATP + H2O = Ca(2+)(out) + ADP + phosphate + H(+). In terms of biological role, this magnesium-dependent enzyme catalyzes the hydrolysis of ATP coupled with the transport of calcium. Transports the calcium to the vacuole and participates in the control of the cytosolic free calcium. This chain is Calcium-transporting ATPase 2 (PMC1), found in Saccharomyces cerevisiae (strain ATCC 204508 / S288c) (Baker's yeast).